A 522-amino-acid polypeptide reads, in one-letter code: Protein nucleotidyltransferase YdiU (522 aa).

8 residues coordinate ATP: G109, G111, R112, K132, D144, G145, R195, and R202. Residue D271 is the Proton acceptor of the active site. 2 residues coordinate Mg(2+): N272 and D281. D281 is a binding site for ATP.

Belongs to the SELO family. Requires Mg(2+) as cofactor. It depends on Mn(2+) as a cofactor.

It catalyses the reaction L-seryl-[protein] + ATP = 3-O-(5'-adenylyl)-L-seryl-[protein] + diphosphate. It carries out the reaction L-threonyl-[protein] + ATP = 3-O-(5'-adenylyl)-L-threonyl-[protein] + diphosphate. The catalysed reaction is L-tyrosyl-[protein] + ATP = O-(5'-adenylyl)-L-tyrosyl-[protein] + diphosphate. The enzyme catalyses L-histidyl-[protein] + UTP = N(tele)-(5'-uridylyl)-L-histidyl-[protein] + diphosphate. It catalyses the reaction L-seryl-[protein] + UTP = O-(5'-uridylyl)-L-seryl-[protein] + diphosphate. It carries out the reaction L-tyrosyl-[protein] + UTP = O-(5'-uridylyl)-L-tyrosyl-[protein] + diphosphate. Its function is as follows. Nucleotidyltransferase involved in the post-translational modification of proteins. It can catalyze the addition of adenosine monophosphate (AMP) or uridine monophosphate (UMP) to a protein, resulting in modifications known as AMPylation and UMPylation. This chain is Protein nucleotidyltransferase YdiU, found in Burkholderia orbicola (strain MC0-3).